Here is a 60-residue protein sequence, read N- to C-terminus: Acidic phospholipase A2 (60 aa).

Y27, G29, and G31 together coordinate Ca(2+). Residues C28 and C44 are joined by a disulfide bond. H47 is a catalytic residue. A Ca(2+)-binding site is contributed by D48.

Belongs to the phospholipase A2 family. Group II subfamily. D49 sub-subfamily. In terms of assembly, monomer. The cofactor is Ca(2+). As to expression, expressed by the venom gland.

Its subcellular location is the secreted. It catalyses the reaction a 1,2-diacyl-sn-glycero-3-phosphocholine + H2O = a 1-acyl-sn-glycero-3-phosphocholine + a fatty acid + H(+). In terms of biological role, snake venom phospholipase A2 (PLA2) that exhibits an indirect hemolytic activity, a low myotoxicity, and induces edema. In addition, this enzyme has been shown to induce the release of some pro- and anti-inflammatory cytokines from human PBMC (IL12B, TNF-alpha, IL1B and IL6 but not variation has been observed for IL-8 and IL-10). PLA2 catalyzes the calcium-dependent hydrolysis of the 2-acyl groups in 3-sn-phosphoglycerides. In Bothrops leucurus (Whitetail lancehead), this protein is Acidic phospholipase A2.